A 294-amino-acid polypeptide reads, in one-letter code: Probable enoyl-CoA hydratase echA12 (294 aa).

Belongs to the enoyl-CoA hydratase/isomerase family.

The enzyme catalyses a (3S)-3-hydroxyacyl-CoA = a (2E)-enoyl-CoA + H2O. It carries out the reaction a 4-saturated-(3S)-3-hydroxyacyl-CoA = a (3E)-enoyl-CoA + H2O. Functionally, could possibly oxidize fatty acids using specific components. This chain is Probable enoyl-CoA hydratase echA12 (echA12), found in Mycobacterium leprae (strain TN).